Consider the following 617-residue polypeptide: 1-deoxy-D-xylulose-5-phosphate synthase (617 aa).

Thiamine diphosphate contacts are provided by residues H77 and 118–120 (GHS). Mg(2+) is bound at residue D149. Thiamine diphosphate is bound by residues 150–151 (GA), N178, Y287, and E368. N178 lines the Mg(2+) pocket.

It belongs to the transketolase family. DXPS subfamily. Homodimer. Requires Mg(2+) as cofactor. It depends on thiamine diphosphate as a cofactor.

The catalysed reaction is D-glyceraldehyde 3-phosphate + pyruvate + H(+) = 1-deoxy-D-xylulose 5-phosphate + CO2. Its pathway is metabolic intermediate biosynthesis; 1-deoxy-D-xylulose 5-phosphate biosynthesis; 1-deoxy-D-xylulose 5-phosphate from D-glyceraldehyde 3-phosphate and pyruvate: step 1/1. Catalyzes the acyloin condensation reaction between C atoms 2 and 3 of pyruvate and glyceraldehyde 3-phosphate to yield 1-deoxy-D-xylulose-5-phosphate (DXP). This Haemophilus ducreyi (strain 35000HP / ATCC 700724) protein is 1-deoxy-D-xylulose-5-phosphate synthase.